The chain runs to 552 residues: Serine protease 53 (552 aa).

A signal peptide spans 1-23 (MRQSWRPELLIVGAVVVIEGLQA). Peptidase S1 domains are found at residues 24 to 273 (AQRA…AHVH) and 294 to 525 (VACG…NLDW). A disordered region spans residues 27–46 (ACGQRGPGPPEPQEGNTLPG). The cysteines at positions 62 and 78 are disulfide-linked. Residues His-77 and Asp-128 each act as charge relay system in the active site. 4 disulfide bridges follow: Cys-158–Cys-230, Cys-187–Cys-209, Cys-220–Cys-249, and Cys-326–Cys-342. Active-site charge relay system residues include Ser-224, His-341, and Asp-382. Disulfide bonds link Cys-443/Cys-463 and Cys-473/Cys-501. The active-site Charge relay system is the Ser-477.

Belongs to the peptidase S1 family.

The protein resides in the secreted. In vitro can degrade the fibrinogen alpha chain of as well as pro-urokinase-type plasminogen activator. The polypeptide is Serine protease 53 (Prss53) (Mus musculus (Mouse)).